We begin with the raw amino-acid sequence, 197 residues long: Protein-S-isoprenylcysteine O-methyltransferase B (197 aa).

A run of 3 helical transmembrane segments spans residues 16 to 36 (MFLAIIFFHTSEYILAIAIHG), 52 to 72 (ALAMLISVLEYIAEIVFFPGL), and 81 to 101 (FGLTMIILGEILRKTAIITAG). Residues 116-119 (HKLV), Y124, and 129-132 (HPSY) contribute to the S-adenosyl-L-methionine site. The chain crosses the membrane as a helical span at residues 140-160 (VGTQVMLCNPISAIAFAVVVW). R166 contacts substrate. Residue E170 coordinates S-adenosyl-L-methionine.

It belongs to the class VI-like SAM-binding methyltransferase superfamily. Isoprenylcysteine carboxyl methyltransferase family. It depends on Zn(2+) as a cofactor. As to expression, expressed in flowers, stems, leaves, roots and siliques. Detected in apices and vascular tissues of leaves and roots, in the stigma and in the filaments and anthers of stamen. Not found in petioles or hypocotyls.

Its subcellular location is the endoplasmic reticulum membrane. It carries out the reaction [protein]-C-terminal S-[(2E,6E)-farnesyl]-L-cysteine + S-adenosyl-L-methionine = [protein]-C-terminal S-[(2E,6E)-farnesyl]-L-cysteine methyl ester + S-adenosyl-L-homocysteine. With respect to regulation, inhibited by farnesylthioacetic acid (FTAA) and N-acetyl-S-trans, trans-farnesyl-l-cysteine (AFC). In terms of biological role, catalyzes the post-translational methylation of isoprenylated C-terminal cysteine residues, resulting in the modulation of the function of prenylated proteins. Involved in negative regulation of abscisic acid signaling. Carboxyl methylation is a reversible and potentially regulated step in the post-translational modification of prenylated proteins. This is Protein-S-isoprenylcysteine O-methyltransferase B from Arabidopsis thaliana (Mouse-ear cress).